A 460-amino-acid polypeptide reads, in one-letter code: MLSRQFVREHPETVRDAIERKGVTGVDLDEILDIDEEWRELKAEGDGLRQERNEVSSKIGELKQDGKDEEAQEAIDRSQELKDELQDIEERADELESQLEEALLELPNIPHESVPTGEGEADNVERYREGFDDLRDLPDEVVPHYDLGEDLDLLDFERGAKVSGGGYQFVKGEGARLEHALIQFMLDVHREQEYVDVLPPIPVNSDSMEGTGQLPKFAEDAYRVGARQDDDYDSDDLWLLPTAEVPVTNMYRGEILLDDDLPVKHQAFSPNFRREAGEHGTETRGYVRVHQFHKVELVNFVRPENSYDRLESLLDEAAEVLDRLELPYRVLDMCTGDMGFTQAKKYDIEVWAPGDDMEDGPDRGGRWLEVSSVSNFEDFQARRAGLRYRPERHESADYLHTLNGSGLAVPRVLVAIMEYYQNDDGTITVPEPLRPYMGGQEVIEGSEKIGESAVGAGEKE.

Basic and acidic residues predominate over residues Ala43–Gly66. The interval Ala43–Leu81 is disordered. Thr242 to Glu244 provides a ligand contact to L-serine. Residues Arg273–Glu275 and Val289 contribute to the ATP site. Residue Glu296 coordinates L-serine. Glu369 to Ser372 contributes to the ATP binding site. Ser405 serves as a coordination point for L-serine.

The protein belongs to the class-II aminoacyl-tRNA synthetase family. Type-1 seryl-tRNA synthetase subfamily. In terms of assembly, homodimer. The tRNA molecule binds across the dimer.

It is found in the cytoplasm. It catalyses the reaction tRNA(Ser) + L-serine + ATP = L-seryl-tRNA(Ser) + AMP + diphosphate + H(+). It carries out the reaction tRNA(Sec) + L-serine + ATP = L-seryl-tRNA(Sec) + AMP + diphosphate + H(+). It participates in aminoacyl-tRNA biosynthesis; selenocysteinyl-tRNA(Sec) biosynthesis; L-seryl-tRNA(Sec) from L-serine and tRNA(Sec): step 1/1. Its function is as follows. Catalyzes the attachment of serine to tRNA(Ser). Is also probably able to aminoacylate tRNA(Sec) with serine, to form the misacylated tRNA L-seryl-tRNA(Sec), which will be further converted into selenocysteinyl-tRNA(Sec). In Haloarcula marismortui (strain ATCC 43049 / DSM 3752 / JCM 8966 / VKM B-1809) (Halobacterium marismortui), this protein is Serine--tRNA ligase (serS).